An 85-amino-acid chain; its full sequence is U4-theraphotoxin-Hhn1a (85 aa).

The N-terminal stretch at 1–22 (MKVTLISILTCAAVLVLHTTAA) is a signal peptide. Residues 23 to 48 (EELEAESQLMEVGMPDTELAAVDEER) constitute a propeptide that is removed on maturation. 3 cysteine pairs are disulfide-bonded: Cys-52-Cys-66, Cys-56-Cys-77, and Cys-71-Cys-82.

Belongs to the neurotoxin 12 (Hwtx-2) family. 02 (Hwtx-2) subfamily. As to quaternary structure, monomer. Expressed by the venom gland.

The protein localises to the secreted. Neurotoxin active on both insects and mammals. In Cyriopagopus hainanus (Chinese bird spider), this protein is U4-theraphotoxin-Hhn1a.